Here is a 150-residue protein sequence, read N- to C-terminus: 3-dehydroquinate dehydratase (150 aa).

Y26 functions as the Proton acceptor in the catalytic mechanism. 3 residues coordinate substrate: N77, H83, and D90. The Proton donor role is filled by H103. Residues 104–105 and R114 each bind substrate; that span reads LS.

It belongs to the type-II 3-dehydroquinase family. As to quaternary structure, homododecamer.

It carries out the reaction 3-dehydroquinate = 3-dehydroshikimate + H2O. The protein operates within metabolic intermediate biosynthesis; chorismate biosynthesis; chorismate from D-erythrose 4-phosphate and phosphoenolpyruvate: step 3/7. Its function is as follows. Catalyzes a trans-dehydration via an enolate intermediate. This chain is 3-dehydroquinate dehydratase, found in Mannheimia succiniciproducens (strain KCTC 0769BP / MBEL55E).